The chain runs to 688 residues: Polyribonucleotide nucleotidyltransferase (688 aa).

2 residues coordinate Mg(2+): aspartate 484 and aspartate 490. In terms of domain architecture, KH spans 550–609 (PTTEIFNVAPDKIVEIIGQGGRVIKEIVEKFEVKIDLNKPSGEVKIMGNKERVLKTKEFI). Residues 626 to 688 (DEVLEAQVKR…NKGKIALDLA (63 aa)) enclose the S1 motif domain.

Belongs to the polyribonucleotide nucleotidyltransferase family. It depends on Mg(2+) as a cofactor.

It is found in the cytoplasm. The enzyme catalyses RNA(n+1) + phosphate = RNA(n) + a ribonucleoside 5'-diphosphate. Its function is as follows. Involved in mRNA degradation. Catalyzes the phosphorolysis of single-stranded polyribonucleotides processively in the 3'- to 5'-direction. The polypeptide is Polyribonucleotide nucleotidyltransferase (Helicobacter pylori (strain G27)).